The following is a 474-amino-acid chain: Probable phenylalanine--tRNA ligase alpha subunit (474 aa).

The segment at 1–150 (MSLSQKILEL…KRKLIYQAKE (150 aa)) is contains the major tRNA-Phe binding sites. L-phenylalanine-binding positions include T308, 350-352 (QVE), and Y390. Residue E392 participates in Mg(2+) binding. An L-phenylalanine-binding site is contributed by F416.

Belongs to the class-II aminoacyl-tRNA synthetase family. Phe-tRNA synthetase alpha subunit type 2 subfamily. As to quaternary structure, tetramer of two alpha and two beta subunits. It depends on Mg(2+) as a cofactor.

The protein localises to the cytoplasm. The enzyme catalyses tRNA(Phe) + L-phenylalanine + ATP = L-phenylalanyl-tRNA(Phe) + AMP + diphosphate + H(+). This is Probable phenylalanine--tRNA ligase alpha subunit from Vairimorpha ceranae (strain BRL01) (Microsporidian parasite).